The following is a 740-amino-acid chain: Dipeptidyl peptidase family member 6 (740 aa).

Position 1 (Met1) is a topological domain, cytoplasmic. A helical; Signal-anchor for type II membrane protein transmembrane segment spans residues 2-22 (LFLPILILNLLIITHAIDIIP). Topologically, residues 23–740 (REVLFQDPKY…VMNRIFPVQG (718 aa)) are lumenal. Asn108, Asn308, and Asn506 each carry an N-linked (GlcNAc...) asparagine glycan. Active-site charge relay system residues include Ser516, Asp604, and His636. Cys535 and Cys658 are joined by a disulfide. N-linked (GlcNAc...) asparagine glycosylation is present at Asn672.

Belongs to the peptidase S9B family. DPPIV subfamily.

The protein localises to the cell membrane. Its function is as follows. Removes N-terminal dipeptides sequentially from polypeptides. Essential for control of distal tip cell migration. The chain is Dipeptidyl peptidase family member 6 (dpf-6) from Caenorhabditis elegans.